We begin with the raw amino-acid sequence, 539 residues long: CTP synthase (539 aa).

The segment at M1–L267 is amidoligase domain. Residue S13 participates in CTP binding. S13 is a UTP binding site. S14–I19 contacts ATP. Y54 is a binding site for L-glutamine. D71 provides a ligand contact to ATP. 2 residues coordinate Mg(2+): D71 and E141. CTP contacts are provided by residues D148–E150, K188–Q193, and K224. UTP contacts are provided by residues K188–Q193 and K224. The 244-residue stretch at K294–Q537 folds into the Glutamine amidotransferase type-1 domain. An L-glutamine-binding site is contributed by G356. Residue C383 is the Nucleophile; for glutamine hydrolysis of the active site. Residues L384–Q387, E407, and R465 contribute to the L-glutamine site. Catalysis depends on residues H510 and E512.

It belongs to the CTP synthase family. In terms of assembly, homotetramer.

The catalysed reaction is UTP + L-glutamine + ATP + H2O = CTP + L-glutamate + ADP + phosphate + 2 H(+). It catalyses the reaction L-glutamine + H2O = L-glutamate + NH4(+). The enzyme catalyses UTP + NH4(+) + ATP = CTP + ADP + phosphate + 2 H(+). Its pathway is pyrimidine metabolism; CTP biosynthesis via de novo pathway; CTP from UDP: step 2/2. Allosterically activated by GTP, when glutamine is the substrate; GTP has no effect on the reaction when ammonia is the substrate. The allosteric effector GTP functions by stabilizing the protein conformation that binds the tetrahedral intermediate(s) formed during glutamine hydrolysis. Inhibited by the product CTP, via allosteric rather than competitive inhibition. Functionally, catalyzes the ATP-dependent amination of UTP to CTP with either L-glutamine or ammonia as the source of nitrogen. Regulates intracellular CTP levels through interactions with the four ribonucleotide triphosphates. This chain is CTP synthase, found in Lactobacillus acidophilus (strain ATCC 700396 / NCK56 / N2 / NCFM).